We begin with the raw amino-acid sequence, 348 residues long: NADH-quinone oxidoreductase subunit H (348 aa).

A run of 8 helical transmembrane segments spans residues 7–27 (IWLLPLLIIVGKTLLLLVVLL), 82–102 (GVFLLAPFVSATLALSTWAVI), 115–135 (VGLLYILAISSLEVYGVIMGG), 161–181 (IGFVLVTVILVSGSLDLTTIV), 199–219 (FLDWNWLVLFPMFIIFFISAL), 251–271 (LFFLGEYVAIVLMCALTTILF), 287–307 (VPGIIWFVLKVCFVFFWFAMV), and 322–342 (LGWKVFLPFSLAMVVITATFL).

It belongs to the complex I subunit 1 family. In terms of assembly, NDH-1 is composed of 14 different subunits. Subunits NuoA, H, J, K, L, M, N constitute the membrane sector of the complex.

It is found in the cell inner membrane. It catalyses the reaction a quinone + NADH + 5 H(+)(in) = a quinol + NAD(+) + 4 H(+)(out). Its function is as follows. NDH-1 shuttles electrons from NADH, via FMN and iron-sulfur (Fe-S) centers, to quinones in the respiratory chain. The immediate electron acceptor for the enzyme in this species is believed to be ubiquinone. Couples the redox reaction to proton translocation (for every two electrons transferred, four hydrogen ions are translocated across the cytoplasmic membrane), and thus conserves the redox energy in a proton gradient. This subunit may bind ubiquinone. The chain is NADH-quinone oxidoreductase subunit H from Bartonella quintana (strain Toulouse) (Rochalimaea quintana).